The sequence spans 190 residues: Protein LZIC (190 aa).

Residues 2–63 are a coiled coil; the sequence is ASRGKTETSK…SEFNDSLKKI (62 aa).

It belongs to the CTNNBIP1 family. Does not interact with CTNNB1.

This is Protein LZIC (Lzic) from Mus musculus (Mouse).